Reading from the N-terminus, the 504-residue chain is Probable ergothioneine transporter EgtUBC (504 aa).

The ABC transmembrane type-1 domain maps to 19-198; that stretch reads LVQHIQISFV…LLAILFDFLL (180 aa). The next 6 helical transmembrane spans lie at 25 to 44, 57 to 74, 81 to 97, 146 to 170, 179 to 198, and 210 to 229; these read ISFV…GIYL, VAAI…GLLI, IVPA…LPIL, MVLI…LILL, LILL…DFLL, and IITI…VPYF. The ergothioneine binding domain stretch occupies residues 231 to 504; it reads SDKKEITIAG…DYLKDQGIIK (274 aa).

It in the N-terminal section; belongs to the binding-protein-dependent transport system permease family. The protein in the C-terminal section; belongs to the OsmX family. In terms of assembly, the complex is probably composed of at least an ATP-binding protein (EgtUA) and a transmembrane protein (EgtUBC).

Its subcellular location is the membrane. Part of an ABC transporter complex EgtU required for the uptake of ergothioneine (EGT), a natural low-molecular weight (LMW) thiol antioxidant. Responsible for the translocation of the substrate across the membrane. Also contains a C-terminal periplasmic solute-binding domain (SBD) which binds to EGT with sub-micromolar affinity. Does not bind glycine betaine, carnitine, choline, proline, or cholate. Plays a role in bile acid tolerance. Dispensable for choline uptake. Probably not involved in betaine, carnitine or choline mediated osmo- or chill tolerance. Plays a role in enhancing virulence in mice. The polypeptide is Probable ergothioneine transporter EgtUBC (Listeria monocytogenes serovar 1/2a (strain ATCC BAA-679 / EGD-e)).